The primary structure comprises 311 residues: Haloalkane dehalogenase (311 aa).

The AB hydrolase-1 domain maps to 30–148 (AIVFQHGNPS…WDDFPDEVAQ (119 aa)). The active-site Nucleophile is the aspartate 107. Glutamate 131 acts as the Proton donor in catalysis. Histidine 272 acts as the Proton acceptor in catalysis.

It belongs to the haloalkane dehalogenase family. Type 2 subfamily. As to quaternary structure, monomer.

It catalyses the reaction 1-haloalkane + H2O = a halide anion + a primary alcohol + H(+). In terms of biological role, catalyzes hydrolytic cleavage of carbon-halogen bonds in halogenated aliphatic compounds, leading to the formation of the corresponding primary alcohols, halide ions and protons. In Mycolicibacterium smegmatis (strain ATCC 700084 / mc(2)155) (Mycobacterium smegmatis), this protein is Haloalkane dehalogenase.